Consider the following 1069-residue polypeptide: Rab GTPase-activating protein 1 (1069 aa).

The tract at residues 1–79 (MDDKASVGKI…DPPMDDQPGE (79 aa)) is disordered. A compositionally biased stretch (low complexity) spans 7-22 (VGKISVSSDSVSTLNS). The residue at position 42 (S42) is a Phosphoserine. Residues 142-298 (EDSVVFSKLT…IFTFSVSLEI (157 aa)) enclose the PID domain. S360 is modified (phosphoserine). A disordered region spans residues 482–527 (ERERRKTTASPSVRLPQSGSQSSVIPSPPEDDEEEDNDEPLLSGSG). Residues 489-506 (TASPSVRLPQSGSQSSVI) are compositionally biased toward polar residues. The span at 510-520 (PEDDEEEDNDE) shows a compositional bias: acidic residues. A Rab-GAP TBC domain is found at 566–752 (GVPEALRGEV…HIIDLLLCEG (187 aa)). Residues 798-1047 (KKLMELACNM…ALNEVQAAKK (250 aa)) adopt a coiled-coil conformation. A Phosphothreonine modification is found at T996.

In terms of assembly, interacts with RAB6A and tubulin gamma.

Its subcellular location is the cytoplasm. It localises to the cytosol. It is found in the cytoskeleton. The protein localises to the microtubule organizing center. The protein resides in the centrosome. Its function is as follows. May act as a GTPase-activating protein of RAB6A. May play a role in microtubule nucleation by centrosome. May participate in a RAB6A-mediated pathway involved in the metaphase-anaphase transition. This Pongo abelii (Sumatran orangutan) protein is Rab GTPase-activating protein 1.